Consider the following 101-residue polypeptide: NADH-quinone oxidoreductase subunit K (101 aa).

A run of 3 helical transmembrane segments spans residues 4 to 24 (LAHY…GIFL), 30 to 50 (IIIL…FVAF), and 61 to 81 (IFVF…LAIL).

The protein belongs to the complex I subunit 4L family. In terms of assembly, NDH-1 is composed of 14 different subunits. Subunits NuoA, H, J, K, L, M, N constitute the membrane sector of the complex.

The protein resides in the cell inner membrane. It catalyses the reaction a quinone + NADH + 5 H(+)(in) = a quinol + NAD(+) + 4 H(+)(out). In terms of biological role, NDH-1 shuttles electrons from NADH, via FMN and iron-sulfur (Fe-S) centers, to quinones in the respiratory chain. The immediate electron acceptor for the enzyme in this species is believed to be ubiquinone. Couples the redox reaction to proton translocation (for every two electrons transferred, four hydrogen ions are translocated across the cytoplasmic membrane), and thus conserves the redox energy in a proton gradient. This chain is NADH-quinone oxidoreductase subunit K, found in Paraburkholderia xenovorans (strain LB400).